A 306-amino-acid chain; its full sequence is Ornithine carbamoyltransferase (306 aa).

Residues 46–49 (STRT), Gln-73, Arg-97, and 124–127 (HPTQ) contribute to the carbamoyl phosphate site. Residues Asn-156, Asp-220, and 224–225 (SM) each bind L-ornithine. Carbamoyl phosphate-binding positions include 260 to 261 (CL) and Arg-288.

Belongs to the aspartate/ornithine carbamoyltransferase superfamily. OTCase family.

It is found in the cytoplasm. The catalysed reaction is carbamoyl phosphate + L-ornithine = L-citrulline + phosphate + H(+). Its pathway is amino-acid degradation; L-arginine degradation via ADI pathway; carbamoyl phosphate from L-arginine: step 2/2. Reversibly catalyzes the transfer of the carbamoyl group from carbamoyl phosphate (CP) to the N(epsilon) atom of ornithine (ORN) to produce L-citrulline. The chain is Ornithine carbamoyltransferase from Campylobacter jejuni subsp. jejuni serotype O:6 (strain 81116 / NCTC 11828).